We begin with the raw amino-acid sequence, 385 residues long: MELQEVLHMNGGEGEASYAKNSSFNQLVLAKVKPVLEQCVRELLRANLPNINKCIKVADLGCASGPNTLLTVWDTVQSIDKVKQEMKNELERPTIQVFLTDLFQNDFNSVFMLLPSFYRKLEKENGRKIGSCLIAAMPGSFHGRLFPEESMHFLHSSYSLQFLSQVPSGLVTELGITANKRSIYSSKASPPPVQKAYLDQFTKDFTTFLRMRSEELLSRGRMLLTCICKGDECDGPNTMDLLEMAINDLVAEGRLGEEKLDSFNVPIYTASVEEVKCMVEEEGSFEILYLQTFKLRYDAGFSIDDDCQVRSHSPVYSDEHARAAHVASLIRSVYEPILASHFGEAIIPDIFHRFATNAAKVIRLGKGFYNNLIISLAKKPEKSDI.

S-adenosyl-L-homocysteine contacts are provided by Y18, C62, N67, D101, L102, S140, and F141. Residues Y158, Q161, and F162 each contribute to the caffeine site. N179 is a Mg(2+) binding site. Position 238 (T238) interacts with caffeine. Residues D261, F263, and N264 each contribute to the Mg(2+) site. Y369 provides a ligand contact to caffeine.

This sequence belongs to the methyltransferase superfamily. Type-7 methyltransferase family. Mg(2+) serves as cofactor. As to expression, expressed in roots, stems, young and old leaves.

The protein operates within alkaloid biosynthesis. In terms of biological role, may be involved in the biosynthesis of caffeine. This Coffea arabica (Arabian coffee) protein is Probable caffeine synthase 4.